Consider the following 425-residue polypeptide: Serine--tRNA ligase (425 aa).

233 to 235 (TAE) serves as a coordination point for L-serine. 264 to 266 (RAE) provides a ligand contact to ATP. Position 287 (glutamate 287) interacts with L-serine. 351–354 (EISS) contributes to the ATP binding site. Position 387 (serine 387) interacts with L-serine.

This sequence belongs to the class-II aminoacyl-tRNA synthetase family. Type-1 seryl-tRNA synthetase subfamily. In terms of assembly, homodimer. The tRNA molecule binds across the dimer.

The protein resides in the cytoplasm. It catalyses the reaction tRNA(Ser) + L-serine + ATP = L-seryl-tRNA(Ser) + AMP + diphosphate + H(+). The enzyme catalyses tRNA(Sec) + L-serine + ATP = L-seryl-tRNA(Sec) + AMP + diphosphate + H(+). Its pathway is aminoacyl-tRNA biosynthesis; selenocysteinyl-tRNA(Sec) biosynthesis; L-seryl-tRNA(Sec) from L-serine and tRNA(Sec): step 1/1. Functionally, catalyzes the attachment of serine to tRNA(Ser). Is also able to aminoacylate tRNA(Sec) with serine, to form the misacylated tRNA L-seryl-tRNA(Sec), which will be further converted into selenocysteinyl-tRNA(Sec). The polypeptide is Serine--tRNA ligase (Clostridium perfringens (strain SM101 / Type A)).